Reading from the N-terminus, the 135-residue chain is uncharacterized protein (135 aa).

This is an uncharacterized protein from Archaeoglobus fulgidus (strain ATCC 49558 / DSM 4304 / JCM 9628 / NBRC 100126 / VC-16).